Reading from the N-terminus, the 129-residue chain is NADH-ubiquinone oxidoreductase chain 3 (129 aa).

3 helical membrane passes run 4 to 24, 48 to 68, and 82 to 102; these read FYMY…WLLA, AAFS…DLEI, and GLYG…AFIL.

The protein belongs to the complex I subunit 3 family.

It is found in the mitochondrion membrane. The catalysed reaction is a ubiquinone + NADH + 5 H(+)(in) = a ubiquinol + NAD(+) + 4 H(+)(out). Functionally, core subunit of the mitochondrial membrane respiratory chain NADH dehydrogenase (Complex I) that is believed to belong to the minimal assembly required for catalysis. Complex I functions in the transfer of electrons from NADH to the respiratory chain. The immediate electron acceptor for the enzyme is believed to be ubiquinone. The chain is NADH-ubiquinone oxidoreductase chain 3 (NAD3) from Candida albicans (strain SC5314 / ATCC MYA-2876) (Yeast).